The sequence spans 357 residues: Peptide chain release factor 1 (357 aa).

Position 233 is an N5-methylglutamine (Q233). The tract at residues 284 to 305 is disordered; sequence RSASISADRKSQVGTGDRSERI.

This sequence belongs to the prokaryotic/mitochondrial release factor family. In terms of processing, methylated by PrmC. Methylation increases the termination efficiency of RF1.

The protein resides in the cytoplasm. In terms of biological role, peptide chain release factor 1 directs the termination of translation in response to the peptide chain termination codons UAG and UAA. The chain is Peptide chain release factor 1 from Clostridium novyi (strain NT).